Reading from the N-terminus, the 63-residue chain is Kurtoxin-like II (63 aa).

The LCN-type CS-alpha/beta domain occupies 2-62; it reads IDGYPVDYWN…ARIKRSGRCR (61 aa). 4 disulfide bridges follow: Cys12-Cys61, Cys16-Cys37, Cys23-Cys44, and Cys27-Cys46.

This sequence belongs to the long (4 C-C) scorpion toxin superfamily. Sodium channel inhibitor family. Alpha subfamily. Expressed by the venom gland.

Its subcellular location is the secreted. In terms of biological role, this neurotoxin acts on sodium and calcium channels. Potently inhibits native voltage-gated T-type calcium channel activity in mouse male germ cells. Also binds Cav3.1/CACNA1G, Cav3.2/CACNA1H, and Cav3.3/CACNA1I T-type calcium channels and inhibits the channels by modifying voltage-dependent gating. In addition, binds and significantly inhibits the inactivation of activated sodium channels (Nav1.2/SCN2A and Nav1.5/SCN5A). In Parabuthus granulatus (Granulated thick-tailed scorpion), this protein is Kurtoxin-like II.